The sequence spans 431 residues: Enolase (431 aa).

Glutamine 163 serves as a coordination point for (2R)-2-phosphoglycerate. Glutamate 205 functions as the Proton donor in the catalytic mechanism. Residues aspartate 242, glutamate 288, and aspartate 315 each contribute to the Mg(2+) site. (2R)-2-phosphoglycerate-binding residues include lysine 340, arginine 369, serine 370, and lysine 391. Residue lysine 340 is the Proton acceptor of the active site.

This sequence belongs to the enolase family. The cofactor is Mg(2+).

The protein localises to the cytoplasm. The protein resides in the secreted. Its subcellular location is the cell surface. It carries out the reaction (2R)-2-phosphoglycerate = phosphoenolpyruvate + H2O. It participates in carbohydrate degradation; glycolysis; pyruvate from D-glyceraldehyde 3-phosphate: step 4/5. Catalyzes the reversible conversion of 2-phosphoglycerate (2-PG) into phosphoenolpyruvate (PEP). It is essential for the degradation of carbohydrates via glycolysis. This chain is Enolase, found in Bacillus cereus (strain ZK / E33L).